Here is a 492-residue protein sequence, read N- to C-terminus: Spore germination protein GerLA (492 aa).

3 helical membrane-spanning segments follow: residues 295-315 (IIAV…QGLI), 384-404 (FLVI…VYSI), and 410-430 (ILLF…IILA).

Belongs to the GerABKA family.

It localises to the membrane. Its function is as follows. Contributes to the L-alanine germination response. The polypeptide is Spore germination protein GerLA (gerLA) (Bacillus cereus).